The following is a 441-amino-acid chain: Probable indole-3-acetic acid-amido synthetase GH3.9 (441 aa).

Belongs to the IAA-amido conjugating enzyme family. Expressed in etiolated seedlings and roots.

Its function is as follows. May catalyze the synthesis of indole-3-acetic acid (IAA)-amino acid conjugates, providing a mechanism for the plant to cope with the presence of excess auxin. This Oryza sativa subsp. japonica (Rice) protein is Probable indole-3-acetic acid-amido synthetase GH3.9 (GH3.9).